A 416-amino-acid chain; its full sequence is Interleukin-1 receptor type 2 (416 aa).

The N-terminal stretch at Met1–Ala13 is a signal peptide. At Phe14–Glu355 the chain is on the extracellular side. Ig-like C2-type domains follow at residues Pro29 to Lys136, Pro146 to Thr233, and Pro249 to Ser357. Intrachain disulfides connect Cys42–Cys128, Cys64–Cys120, and Cys164–Cys219. N-linked (GlcNAc...) asparagine glycosylation is found at Asn124, Asn208, Asn231, and Asn289. Cysteines 270 and 338 form a disulfide. The chain crosses the membrane as a helical span at residues Val356–Ile381. Over Arg382–Lys416 the chain is Cytoplasmic. Residues Thr396–Lys416 form a disordered region. A compositionally biased stretch (polar residues) spans Pro399–Lys416.

This sequence belongs to the interleukin-1 receptor family. In terms of assembly, associates with IL1RAP to form a non-signaling interleukin-1 receptor complex. A soluble form (sIL1R2) can also be produced by proteolytic cleavage at the cell surface (shedding) involving a metalloproteinase.

It localises to the membrane. The protein localises to the cell membrane. The protein resides in the secreted. Non-signaling receptor for IL1A, IL1B and IL1RN. Reduces IL1B activities. Serves as a decoy receptor by competitive binding to IL1B and preventing its binding to IL1R1. Also modulates cellular response through non-signaling association with IL1RAP after binding to IL1B. IL1R2 (membrane and secreted forms) preferentially binds IL1B and poorly IL1A and IL1RN. The secreted IL1R2 recruits secreted IL1RAP with high affinity; this complex formation may be the dominant mechanism for neutralization of IL1B by secreted/soluble receptors. The polypeptide is Interleukin-1 receptor type 2 (Il1r2) (Rattus norvegicus (Rat)).